A 592-amino-acid chain; its full sequence is Putative phosphatidylinositol 4-kinase alpha-like protein P2 (592 aa).

The segment at 180–318 (EQLVEENTGS…ISWQAAIFKL (139 aa)) is pleckstrin homology (PH) domain conferring phosphoinositide binding specificity. The PI3K/PI4K catalytic domain maps to 275–576 (KVKRCGVSEL…VIQSCFLSNR (302 aa)). Positions 281 to 287 (VSELEKE) are G-loop. Residues 441 to 449 (QIKDRHNGN) are catalytic loop. Residues 460 to 484 (HIDFGFMFESSPGGNLGWEPDIKLT) are activation loop.

It belongs to the PI3/PI4-kinase family. Type III PI4K subfamily.

The polypeptide is Putative phosphatidylinositol 4-kinase alpha-like protein P2 (PI4KAP2) (Homo sapiens (Human)).